The sequence spans 1387 residues: MAPGCKSELRNVTNSHSNQPSNEGDAIKVFVRIRPAEEGARSADGEQSFCLSVLSQTTLRLHSNPDPKTFVFDYVAGMDTTQESVFSTVAKSIVESCMSGYNGTIFAYGQTGSGKTFTMMGPSDSDNFSHNLRGIIPRSFEYLFSLIDREKEKAGAGKSFLCKCSFIEVYNEQIYDLLDSASVGLYLREHIKKGVFVVGAVEQAVTSAAETYQVLSRGWRNRRVASTSMNRESSRSHAVFTITIESMEKSSETVNIRTSLLNLVDLAGSERQKDTHAEGMRLKEAGNINRSLSCLGQVITALVDVGNGKQRHICYRDSKLTFLLRDSLGGNAKTAIIANVHPGSRCFGETLSTLNFAQRAKLIKNKAVVNEDTQGNVSQLQAEVKRLKEQLSQFTSGQITPESLLARDKEKTNYIEYFLEAMLFFKKSEQEKKSLIEKITQLEDLTLKKEKFIQSNKMIVKFREDQIMRLERLHKEGRGSFLPEEQDRLLSELRDEVQTLREHVEHHPRLAKYAMENHSLREENRRLKLLAPVKRAHEIDAQSIARLEKAFAEVSSTETNDKGLQGFSPKALKESSFFTNTEKLKAQLLQIQTELNNSKQEYEEFKELTRKKQLELESELQSLQKANLNLENLLEATKVCKRQEVSQLNKLHAETLKIITTPTKAYQLCSRLVPKSSPEVGSFGFLCTESSSRLDNDILNEPVPPEMSEQALEAVSEELRTVQEQLSVLQVKLDEEERKNLKLQQNVDKLEHHSTQMQELFSSERSDWTKQQQEHVTQLSDLEKQLQDAQTKNEFLKCEVHDLRIVLNSADKELSLVKLEYSTFKENHEKELSQLSERHVQVQLQLDNARLENEKLLESQACLQDSYDNLQEVMKFEIDQLSKNLQNCKQENETLKSDLHNLVELFEAEKERNNKLSLQFEEDKENSSKEILKVLETVRQEKQKEMAKCEKQMAKIQKLEESLLATENVISSLEKSRESDKELVTNLMNQIQELRISIGEKSETIATLKQELQDINCKYNASLADKEESKELIRRQEVDILELKETLRLRILSEDIERDMLCEDLAHATEQLNMLTEASKKHSGLLQSAQEELTRKEALIQELQHKLNQEKEEVEQKKNEFSLKMRQLEHVMGSATEYPQSPKTPPHFQAHLAKLLETQEQEIEDGRASKTSLQHLVTKLNEDREVKNAEILRMKDQLCEMENLRLESQQLREKNWLLQRQLDDVKRQQESGDQSHPDSQQLKNEHEEIIKERLAKNKLIEEMLKMKTNLEEVQSALHSKEKACHRMSEEIERTRTLESRAFQEKEQLRSKLEEMYEERERTFLEMEMLKKQLEFLAEENGKLVGHQNLHQKIQYVVRLKKENIRLTEETEKLRAENLFLKEKKKEF.

The tract at residues 1-23 (MAPGCKSELRNVTNSHSNQPSNE) is disordered. Polar residues predominate over residues 10-22 (RNVTNSHSNQPSN). In terms of domain architecture, Kinesin motor spans 26 to 363 (AIKVFVRIRP…LNFAQRAKLI (338 aa)). ATP is bound at residue 109 to 116 (GQTGSGKT). The stretch at 368–1132 (VVNEDTQGNV…LKMRQLEHVM (765 aa)) forms a coiled coil. At Ser-568 the chain carries Phosphoserine. N6-acetyllysine is present on Lys-1009. A phosphoserine mark is found at Ser-1141 and Ser-1169.

The protein belongs to the TRAFAC class myosin-kinesin ATPase superfamily. Kinesin family. KLP2 subfamily. As to quaternary structure, interacts with MKI67 and TPX2. As to expression, expressed in brain (neurons in the external germinal layer of the cerebellum and in ventricular zones) (at protein level). Expressed in spleen and testis.

It localises to the cytoplasm. Its subcellular location is the cytoskeleton. It is found in the spindle. Its function is as follows. Plus-end directed kinesin-like motor enzyme involved in mitotic spindle assembly. The polypeptide is Kinesin-like protein KIF15 (Kif15) (Mus musculus (Mouse)).